Consider the following 422-residue polypeptide: Ubiquitin-conjugating enzyme E2 Q1 (422 aa).

The residue at position 1 (Met1) is an N-acetylmethionine. Low complexity predominate over residues 1–15 (MQQPQPQGQQQPGPG). Disordered regions lie at residues 1–40 (MQQPQPQGQQQPGPGQQLGGQGAAPGAGGGPGGGPGPGPC) and 174–221 (PLPA…EDDG). The segment covering 16–35 (QQLGGQGAAPGAGGGPGGGP) has biased composition (gly residues). Positions 185–200 (VSSEDEDEEMPEDTED) are enriched in acidic residues. Residues 212–221 (AEGKKSEDDG) are compositionally biased toward basic and acidic residues. The UBC core domain occupies 251–415 (QATDRLMKEL…VQIHEKNGWY (165 aa)). The Glycyl thioester intermediate role is filled by Cys351.

This sequence belongs to the ubiquitin-conjugating enzyme family. In terms of assembly, monomer and homodimer. Only the homodimer is linked to ubiquitin through thiolester activation. Interacts (via N-terminus) with B4GALT1 (via N-terminal cytoplasmic domain). The interaction is direct. Post-translationally, autoubiquitinated in vitro in the presence of NEDD4L. In terms of tissue distribution, widely expressed.

Its subcellular location is the nucleus. The protein resides in the cell projection. The protein localises to the filopodium. It is found in the cytoplasm. It localises to the cytosol. The catalysed reaction is S-ubiquitinyl-[E1 ubiquitin-activating enzyme]-L-cysteine + [E2 ubiquitin-conjugating enzyme]-L-cysteine = [E1 ubiquitin-activating enzyme]-L-cysteine + S-ubiquitinyl-[E2 ubiquitin-conjugating enzyme]-L-cysteine.. The protein operates within protein modification; protein ubiquitination. Catalyzes the covalent attachment of ubiquitin to other proteins. May be involved in hormonal homeostasis in females. Involved in regulation of B4GALT1 cell surface expression, B4GALT1-mediated cell adhesion to laminin and embryoid body formation. This chain is Ubiquitin-conjugating enzyme E2 Q1 (UBE2Q1), found in Homo sapiens (Human).